We begin with the raw amino-acid sequence, 360 residues long: UDP-N-acetylglucosamine--N-acetylmuramyl-(pentapeptide) pyrophosphoryl-undecaprenol N-acetylglucosamine transferase (360 aa).

Residues 17–19, Asn130, Arg166, Ser200, Ile247, and Gln291 contribute to the UDP-N-acetyl-alpha-D-glucosamine site; that span reads TAG.

This sequence belongs to the glycosyltransferase 28 family. MurG subfamily.

The protein resides in the cell membrane. The enzyme catalyses di-trans,octa-cis-undecaprenyl diphospho-N-acetyl-alpha-D-muramoyl-L-alanyl-D-glutamyl-meso-2,6-diaminopimeloyl-D-alanyl-D-alanine + UDP-N-acetyl-alpha-D-glucosamine = di-trans,octa-cis-undecaprenyl diphospho-[N-acetyl-alpha-D-glucosaminyl-(1-&gt;4)]-N-acetyl-alpha-D-muramoyl-L-alanyl-D-glutamyl-meso-2,6-diaminopimeloyl-D-alanyl-D-alanine + UDP + H(+). The protein operates within cell wall biogenesis; peptidoglycan biosynthesis. Functionally, cell wall formation. Catalyzes the transfer of a GlcNAc subunit on undecaprenyl-pyrophosphoryl-MurNAc-pentapeptide (lipid intermediate I) to form undecaprenyl-pyrophosphoryl-MurNAc-(pentapeptide)GlcNAc (lipid intermediate II). This chain is UDP-N-acetylglucosamine--N-acetylmuramyl-(pentapeptide) pyrophosphoryl-undecaprenol N-acetylglucosamine transferase, found in Corynebacterium efficiens (strain DSM 44549 / YS-314 / AJ 12310 / JCM 11189 / NBRC 100395).